The sequence spans 333 residues: Replication factor C subunit 2 (333 aa).

A2 carries the N-acetylalanine modification. 55-62 (GPPGTGKT) is an ATP binding site.

It belongs to the activator 1 small subunits family. As to quaternary structure, heterotetramer of subunits RFC2, RFC3, RFC4 and RFC5 that can form a complex with RFC1.

The protein localises to the nucleus. Its function is as follows. May be involved in DNA replication and thus regulate cell proliferation. The sequence is that of Replication factor C subunit 2 (RFC2) from Arabidopsis thaliana (Mouse-ear cress).